A 224-amino-acid polypeptide reads, in one-letter code: uncharacterized protein (224 aa).

A coiled-coil region spans residues Q108–E137.

This is an uncharacterized protein from Human picobirnavirus (strain Human/Thailand/Hy005102/-) (PBV).